Consider the following 362-residue polypeptide: 3-isopropylmalate dehydrogenase (362 aa).

77–88 (GPKWGTGSVRPE) is a binding site for NAD(+). Substrate contacts are provided by Arg-95, Arg-105, Arg-134, and Asp-223. 3 residues coordinate Mg(2+): Asp-223, Asp-248, and Asp-252. 287–298 (GSAPDLPKGKVN) is a binding site for NAD(+).

The protein belongs to the isocitrate and isopropylmalate dehydrogenases family. As to quaternary structure, homodimer. Mg(2+) serves as cofactor. It depends on Mn(2+) as a cofactor.

It is found in the cytoplasm. The catalysed reaction is (2R,3S)-3-isopropylmalate + NAD(+) = 4-methyl-2-oxopentanoate + CO2 + NADH. It functions in the pathway amino-acid biosynthesis; L-leucine biosynthesis; L-leucine from 3-methyl-2-oxobutanoate: step 3/4. Functionally, catalyzes the oxidation of 3-carboxy-2-hydroxy-4-methylpentanoate (3-isopropylmalate) to 3-carboxy-4-methyl-2-oxopentanoate. The product decarboxylates to 4-methyl-2 oxopentanoate. This Zygosaccharomyces rouxii (strain ATCC 2623 / CBS 732 / NBRC 1130 / NCYC 568 / NRRL Y-229) protein is 3-isopropylmalate dehydrogenase (LEU2).